The sequence spans 144 residues: Intraflagellar transport protein 25 homolog (144 aa).

Residues N29, D32, and T37 each coordinate Ca(2+).

This sequence belongs to the IFT25 family. As to quaternary structure, component of the IFT complex B, at least composed of IFT20, IFT22, IFT25, IFT27, IFT46, IFT52, TRAF3IP1/IFT54, IFT57, IFT74, IFT80, IFT81, and IFT88. Interacts with IFT27. Interacts with IFT88. As to expression, detected in placenta.

The protein localises to the cell projection. It is found in the cilium. In terms of biological role, component of the IFT complex B required for sonic hedgehog/SHH signaling. May mediate transport of SHH components: required for the export of SMO and PTCH1 receptors out of the cilium and the accumulation of GLI2 at the ciliary tip in response to activation of the SHH pathway, suggesting it is involved in the dynamic transport of SHH signaling molecules within the cilium. Not required for ciliary assembly. Its role in intraflagellar transport is mainly seen in tissues rich in ciliated cells such as kidney and testis. Essential for male fertility, spermiogenesis and sperm flagella formation. Plays a role in the early development of the kidney. May be involved in the regulation of ureteric bud initiation. This chain is Intraflagellar transport protein 25 homolog, found in Homo sapiens (Human).